Consider the following 268-residue polypeptide: Purine nucleoside phosphorylase (268 aa).

Phosphate contacts are provided by residues S36, H68, 88–90, and A120; that span reads RIH. E189 contacts a purine D-ribonucleoside. S208 contacts phosphate. N231 is an a purine D-ribonucleoside binding site.

This sequence belongs to the PNP/MTAP phosphorylase family. As to quaternary structure, homotrimer.

It catalyses the reaction a purine 2'-deoxy-D-ribonucleoside + phosphate = a purine nucleobase + 2-deoxy-alpha-D-ribose 1-phosphate. It participates in purine metabolism; purine nucleoside salvage. The purine nucleoside phosphorylases catalyze the phosphorolytic breakdown of the N-glycosidic bond in the beta-(deoxy)ribonucleoside molecules, with the formation of the corresponding free purine bases and pentose-1-phosphate. Cleaves guanosine, inosine, 2'-deoxyguanosine and 2'-deoxyinosine. This Mycobacterium bovis (strain ATCC BAA-935 / AF2122/97) protein is Purine nucleoside phosphorylase (punA).